Reading from the N-terminus, the 328-residue chain is dITP/XTP pyrophosphatase (328 aa).

The tract at residues 1–129 (MSEKIYEYKD…ATSEQGFGDI (129 aa)) is unknown. Positions 130–324 (ILIATRNEGK…KLMEVFPAWQ (195 aa)) are NTP pyrophosphatase. 134 to 139 (TRNEGK) is a binding site for substrate. Aspartate 196 serves as the catalytic Proton acceptor. Aspartate 196 provides a ligand contact to Mg(2+). Substrate-binding positions include serine 197, 280–283 (FGYD), lysine 303, and 308–309 (HR).

It belongs to the HAM1 NTPase family. As to quaternary structure, homodimer. Requires Mg(2+) as cofactor.

The enzyme catalyses XTP + H2O = XMP + diphosphate + H(+). It catalyses the reaction dITP + H2O = dIMP + diphosphate + H(+). It carries out the reaction ITP + H2O = IMP + diphosphate + H(+). In terms of biological role, pyrophosphatase that catalyzes the hydrolysis of nucleoside triphosphates to their monophosphate derivatives, with a high preference for the non-canonical purine nucleotides XTP (xanthosine triphosphate), dITP (deoxyinosine triphosphate) and ITP. Seems to function as a house-cleaning enzyme that removes non-canonical purine nucleotides from the nucleotide pool, thus preventing their incorporation into DNA/RNA and avoiding chromosomal lesions. In Streptococcus pyogenes serotype M3 (strain ATCC BAA-595 / MGAS315), this protein is dITP/XTP pyrophosphatase.